The primary structure comprises 369 residues: Peptidyl-prolyl cis-trans isomerase D (369 aa).

The region spanning 7–175 is the PPIase cyclophilin-type domain; that stretch reads YFDISCNGKP…EDWKIADCGE (169 aa). TPR repeat units lie at residues 217-250, 268-301, and 306-339; these read VSKI…LNDY, LSCY…EQID, and TKAL…EPND.

Belongs to the cyclophilin-type PPIase family. PPIase D subfamily.

It localises to the cytoplasm. The enzyme catalyses [protein]-peptidylproline (omega=180) = [protein]-peptidylproline (omega=0). In terms of biological role, PPIases accelerate the folding of proteins. It catalyzes the cis-trans isomerization of proline imidic peptide bonds in oligopeptides. This is Peptidyl-prolyl cis-trans isomerase D (CPR6) from Candida albicans (strain SC5314 / ATCC MYA-2876) (Yeast).